A 249-amino-acid chain; its full sequence is ATP synthase subunit a, chloroplastic (249 aa).

The next 5 membrane-spanning stretches (helical) occupy residues 40–60, 97–117, 136–156, 201–221, and 222–242; these read QVLI…VLAI, VPFI…GALL, INTT…AGLS, LVVV…VMFL, and GLFT…AYIG.

It belongs to the ATPase A chain family. F-type ATPases have 2 components, CF(1) - the catalytic core - and CF(0) - the membrane proton channel. CF(1) has five subunits: alpha(3), beta(3), gamma(1), delta(1), epsilon(1). CF(0) has four main subunits: a, b, b' and c.

The protein resides in the plastid. Its subcellular location is the chloroplast thylakoid membrane. Functionally, key component of the proton channel; it plays a direct role in the translocation of protons across the membrane. This is ATP synthase subunit a, chloroplastic from Capsella bursa-pastoris (Shepherd's purse).